A 102-amino-acid chain; its full sequence is NADH-quinone oxidoreductase subunit K (102 aa).

Transmembrane regions (helical) follow at residues 5–25 (IAHYLTVSAVLFTLGVFGIFL), 31–51 (IVILMSVELILLAVNINFVAF), and 66–86 (FVLTVAAAEAAIGLAILVVFF).

It belongs to the complex I subunit 4L family. NDH-1 is composed of 14 different subunits. Subunits NuoA, H, J, K, L, M, N constitute the membrane sector of the complex.

It is found in the cell inner membrane. The catalysed reaction is a quinone + NADH + 5 H(+)(in) = a quinol + NAD(+) + 4 H(+)(out). Its function is as follows. NDH-1 shuttles electrons from NADH, via FMN and iron-sulfur (Fe-S) centers, to quinones in the respiratory chain. The immediate electron acceptor for the enzyme in this species is believed to be ubiquinone. Couples the redox reaction to proton translocation (for every two electrons transferred, four hydrogen ions are translocated across the cytoplasmic membrane), and thus conserves the redox energy in a proton gradient. The chain is NADH-quinone oxidoreductase subunit K from Mesorhizobium japonicum (strain LMG 29417 / CECT 9101 / MAFF 303099) (Mesorhizobium loti (strain MAFF 303099)).